The chain runs to 496 residues: Glutamyl-tRNA(Gln) amidotransferase subunit A (496 aa).

Catalysis depends on charge relay system residues Lys-75 and Ser-150. Ser-174 serves as the catalytic Acyl-ester intermediate.

This sequence belongs to the amidase family. GatA subfamily. In terms of assembly, heterotrimer of A, B and C subunits.

It catalyses the reaction L-glutamyl-tRNA(Gln) + L-glutamine + ATP + H2O = L-glutaminyl-tRNA(Gln) + L-glutamate + ADP + phosphate + H(+). Functionally, allows the formation of correctly charged Gln-tRNA(Gln) through the transamidation of misacylated Glu-tRNA(Gln) in organisms which lack glutaminyl-tRNA synthetase. The reaction takes place in the presence of glutamine and ATP through an activated gamma-phospho-Glu-tRNA(Gln). The sequence is that of Glutamyl-tRNA(Gln) amidotransferase subunit A from Burkholderia cenocepacia (strain HI2424).